Here is a 420-residue protein sequence, read N- to C-terminus: Tyrosine--tRNA ligase (420 aa).

L-tyrosine is bound at residue Tyr38. Positions 43–52 match the 'HIGH' region motif; it reads PTGDSLHIGH. L-tyrosine is bound by residues Tyr169 and Gln173. A 'KMSKS' region motif is present at residues 231-235; the sequence is KFGKS. Lys234 is a binding site for ATP. An S4 RNA-binding domain is found at 353–419; the sequence is KNIVEFLVET…GKRKYTLVKI (67 aa).

This sequence belongs to the class-I aminoacyl-tRNA synthetase family. TyrS type 1 subfamily. In terms of assembly, homodimer.

It localises to the cytoplasm. The catalysed reaction is tRNA(Tyr) + L-tyrosine + ATP = L-tyrosyl-tRNA(Tyr) + AMP + diphosphate + H(+). Its function is as follows. Catalyzes the attachment of tyrosine to tRNA(Tyr) in a two-step reaction: tyrosine is first activated by ATP to form Tyr-AMP and then transferred to the acceptor end of tRNA(Tyr). This chain is Tyrosine--tRNA ligase, found in Lactobacillus johnsonii (strain CNCM I-12250 / La1 / NCC 533).